We begin with the raw amino-acid sequence, 216 residues long: Adenylate kinase (216 aa).

10-15 (GAGKGT) is a binding site for ATP. The segment at 30–59 (STGDILRENVKKGTALGLKAKSYMDKGELV) is NMP. AMP is bound by residues Thr31, Arg36, 57 to 59 (ELV), 85 to 88 (GFPR), and Gln92. The interval 126-163 (GRRICRSCGASYHLVFNPPKAKDLCDSCGGELYQRDDD) is LID. ATP is bound at residue Arg127. Residues Cys130 and Cys133 each contribute to the Zn(2+) site. 136-137 (SY) contacts ATP. Zn(2+) contacts are provided by Cys150 and Cys153. AMP-binding residues include Arg160 and Arg171. ATP is bound at residue Lys199.

Belongs to the adenylate kinase family. Monomer.

The protein resides in the cytoplasm. The catalysed reaction is AMP + ATP = 2 ADP. Its pathway is purine metabolism; AMP biosynthesis via salvage pathway; AMP from ADP: step 1/1. In terms of biological role, catalyzes the reversible transfer of the terminal phosphate group between ATP and AMP. Plays an important role in cellular energy homeostasis and in adenine nucleotide metabolism. In Methanocella arvoryzae (strain DSM 22066 / NBRC 105507 / MRE50), this protein is Adenylate kinase.